A 184-amino-acid polypeptide reads, in one-letter code: Probable DNA-directed RNA polymerase subunit delta (184 aa).

In terms of domain architecture, HTH HARE-type spans 14–81 (LSMIEVARAI…GENVWALRSW (68 aa)). 2 disordered regions span residues 88 to 107 (DEEV…KHHK) and 118 to 184 (GDDD…DEDD). Residues 118–164 (GDDDIIDYDNDDPEDDDLDAATDDSDDDYSDDDSDYDEDNDDADDVL) are compositionally biased toward acidic residues.

Belongs to the RpoE family. In terms of assembly, RNAP is composed of a core of 2 alpha, a beta and a beta' subunits. The core is associated with a delta subunit and one of several sigma factors.

Functionally, participates in both the initiation and recycling phases of transcription. In the presence of the delta subunit, RNAP displays an increased specificity of transcription, a decreased affinity for nucleic acids, and an increased efficiency of RNA synthesis because of enhanced recycling. The protein is Probable DNA-directed RNA polymerase subunit delta of Lactobacillus acidophilus (strain ATCC 700396 / NCK56 / N2 / NCFM).